Consider the following 138-residue polypeptide: Phosphoribosyl-AMP cyclohydrolase (138 aa).

Asp-84 is a binding site for Mg(2+). Cys-85 contacts Zn(2+). Mg(2+) contacts are provided by Asp-86 and Asp-88. The Zn(2+) site is built by Cys-102 and Cys-109.

It belongs to the PRA-CH family. In terms of assembly, homodimer. The cofactor is Mg(2+). Zn(2+) serves as cofactor.

It is found in the cytoplasm. The enzyme catalyses 1-(5-phospho-beta-D-ribosyl)-5'-AMP + H2O = 1-(5-phospho-beta-D-ribosyl)-5-[(5-phospho-beta-D-ribosylamino)methylideneamino]imidazole-4-carboxamide. It functions in the pathway amino-acid biosynthesis; L-histidine biosynthesis; L-histidine from 5-phospho-alpha-D-ribose 1-diphosphate: step 3/9. In terms of biological role, catalyzes the hydrolysis of the adenine ring of phosphoribosyl-AMP. This is Phosphoribosyl-AMP cyclohydrolase from Burkholderia pseudomallei (strain K96243).